The chain runs to 499 residues: Probable dipeptidase B (499 aa).

C26 is a catalytic residue.

This sequence belongs to the peptidase C69 family.

The enzyme catalyses an L-aminoacyl-L-amino acid + H2O = 2 an L-alpha-amino acid. The chain is Probable dipeptidase B (pepDB) from Streptococcus pyogenes serotype M6 (strain ATCC BAA-946 / MGAS10394).